Here is a 435-residue protein sequence, read N- to C-terminus: Diguanylate cyclase TpbB (435 aa).

The Cytoplasmic segment spans residues 1 to 22; it reads MNRRRRYTGSNPSLRRVLYRAH. A helical membrane pass occupies residues 23–43; the sequence is LGVALVAVFTAGLAVTLVGLL. Topologically, residues 44 to 154 are periplasmic; it reads TLRAYADPNQ…VKGSGGSLLR (111 aa). Residues 155–175 form a helical membrane-spanning segment; the sequence is FLLTGFAGMVLCLLLTALGAF. Topologically, residues 176-435 are cytoplasmic; it reads YLSRRLVRGI…DSATPEAPPK (260 aa). Residues 183-236 form the HAMP domain; that stretch reads RGIVGPLDQLAKVAHTVRRERDFEKRVPEAGIAELSQLGEDFNALLDELESWQA. Residues 279–415 form the GGDEF domain; the sequence is EQLAVLFIDS…GSRRLAELND (137 aa). Residues Ser-288 and Asp-330 each contribute to the Mg(2+) site. The active-site Proton acceptor is Asp-330. Over residues 414–426 the composition is skewed to basic and acidic residues; it reads NDPRILQEEKEID. A disordered region spans residues 414–435; sequence NDPRILQEEKEIDSATPEAPPK.

Mg(2+) serves as cofactor. In terms of processing, phosphorylated at both Tyr residues and Ser/Thr residues. Dephosphorylated and inactivated by TpbA.

Its subcellular location is the cell inner membrane. The enzyme catalyses 2 GTP = 3',3'-c-di-GMP + 2 diphosphate. Its pathway is purine metabolism; 3',5'-cyclic di-GMP biosynthesis. Activity is tightly controlled by YfiR, a small periplasmic protein, and the OmpA/Pal-like outer-membrane lipoprotein YfiB. Diguanylate cyclase activity is inhibited by the specific interaction of YfiR with the TpbB periplasmic domain and is activated by YfiB, which releases the YfiR-mediated repression through sequestration of YfiR to the outer membrane. Activity is also controlled by dephosphorylation of the periplasmic domain by the tyrosine phosphatase TpbA. Functionally, catalyzes the synthesis of cyclic-di-GMP (c-di-GMP) via the condensation of 2 GTP molecules. Important for the regulation of biofilm maintenance when exposed to peroxide. Its function is as follows. Part of the YfiB-TpbB-YfiR (or yfiBNR) system, encoding a tripartite signaling module that modulates intracellular c-di-GMP levels. The system is a key regulator of the small colony variant (SCV) phenotype, and plays an important role in biofilm formation and in vivo persistence. The c-di-GMP produced by TpbB/YfiN stimulates the production of the Pel and Psl exopolysaccharides, which promotes surface attachment, generates an SCV phenotype and confers resistance against phagocytosis. The chain is Diguanylate cyclase TpbB from Pseudomonas aeruginosa (strain UCBPP-PA14).